A 304-amino-acid chain; its full sequence is Tissue factor pathway inhibitor (304 aa).

An N-terminal signal peptide occupies residues 1-28 (MIYTMKKVHALWASVCLLLNLAPAPLNA). Threonine 42 is a glycosylation site (O-linked (GalNAc...) threonine; partial). BPTI/Kunitz inhibitor domains lie at 54–104 (CAFK…KKMC) and 125–175 (CFLE…KNIC). 6 cysteine pairs are disulfide-bonded: cysteine 54–cysteine 104, cysteine 63–cysteine 87, cysteine 79–cysteine 100, cysteine 125–cysteine 175, cysteine 134–cysteine 158, and cysteine 150–cysteine 171. A glycan (N-linked (GlcNAc...) asparagine) is linked at asparagine 145. N-linked (GlcNAc...) asparagine glycosylation is present at asparagine 195. O-linked (GalNAc...) serine; partial glycosylation occurs at serine 202. Threonine 203 carries O-linked (GalNAc...) threonine glycosylation. A BPTI/Kunitz inhibitor 3 domain is found at 217-267 (CLTPADRGLCRANENRFYYNSVIGKCRPFKYSGCGGNENNFTSKQECLRAC). Disulfide bonds link cysteine 217/cysteine 267, cysteine 226/cysteine 250, and cysteine 242/cysteine 263.

O-glycosylated. Mostly in endothelial cells.

It localises to the secreted. The protein resides in the microsome membrane. Inhibits factor X (X(a)) directly and, in a Xa-dependent way, inhibits VIIa/tissue factor activity, presumably by forming a quaternary Xa/LACI/VIIa/TF complex. It possesses an antithrombotic action and also the ability to associate with lipoproteins in plasma. This chain is Tissue factor pathway inhibitor (TFPI), found in Homo sapiens (Human).